Reading from the N-terminus, the 206-residue chain is Protein GET1 (206 aa).

Residues 1-4 (MPSL) lie on the Lumenal side of the membrane. The chain crosses the membrane as a helical span at residues 5 to 24 (LITILLLNIVIYVINTIGAA). Residues 25-110 (TIDSLLWLFY…SFDMTVKSVR (86 aa)) lie on the Cytoplasmic side of the membrane. The stretch at 42–99 (SHMAREQRRLKREVIQLKREMNATSSQDEFAKWAKLRRRHDKALETYEAKNNELTQCK) forms a coiled coil. A helical transmembrane segment spans residues 111 to 131 (WAATSGLMLFLQFWYSKRPIF). The Lumenal portion of the chain corresponds to 132 to 155 (TLPPGWIPWQVQWVLSFPRAPMGT). A helical transmembrane segment spans residues 156-172 (VSIQIWGGACATVVALV). At 173 to 206 (GDAVGATMGFVSASKKEGMKVGAGVGEKEGKKSQ) the chain is on the cytoplasmic side.

The protein belongs to the WRB/GET1 family. Interacts with GET3.

Its subcellular location is the endoplasmic reticulum membrane. In terms of biological role, required for the post-translational delivery of tail-anchored (TA) proteins to the endoplasmic reticulum. Acts as a membrane receptor for soluble GET3, which recognizes and selectively binds the transmembrane domain of TA proteins in the cytosol. This chain is Protein GET1, found in Ajellomyces dermatitidis (strain ER-3 / ATCC MYA-2586) (Blastomyces dermatitidis).